Here is a 664-residue protein sequence, read N- to C-terminus: MARKYIDILKKSKMMLFQDVGKSFEDDSPCKEEAPKTQIQHSVRDFCEQTTFHGVNMIFTTSLYWVRFLWVVVSLVCICLCMYSFSHVKDKYDRKEKIVNVELVFESAPFPAITVCNLNPFKNHLARSVPEISETLDAFHQAVVYSNDATMDELSGRGRRSLNDGPSFKYLQYEPVYSDCSCVPGRQECIAQTSAPRTLENACICNYDRHDGSAWPCYSAQTWEKSICPECNDIGFCNVPNTTGSGNIPCYCQLEMGYCVFQPESRVRRIWEFQGNKIPEKGSPLRKEYMEQLTQLGYGNMTDQVAITTQAKEKMILKMSGLHPQRRAALGYGKSELIKMCSFNGQQCNIDTEFKLHIDPSFGNCYTFNANPEKKLASSRAGPSYGLRLMMFVNSSDYLPTTEATGVRIAIHGKEECPFPDTFGYSAPTGVISSFGISLRNINRLPQPYGNCLQKDNPQSRSIYKGYKYEPEGCFRSCYQYRIIAKCGCADPRYPKPWKRSAWCDSTNTTTLNCLTTEGAKLSTKENQKHCKCIQPCQQDQYTTTYSAAKWPSGSIQTSCDNHSKDCNSYLREHAAMIEIYYEQMSYEILRESESYSWFNLMADMGGQAGLFLGASIMSVIEFLFFAVRTLGIACKPRRWRQKTELLRAEELNDAEKGVSTNNN.

Over 1–67 (MARKYIDILK…IFTTSLYWVR (67 aa)) the chain is Cytoplasmic. Residues 68-88 (FLWVVVSLVCICLCMYSFSHV) traverse the membrane as a helical segment. The Extracellular portion of the chain corresponds to 89-607 (KDKYDRKEKI…WFNLMADMGG (519 aa)). N-linked (GlcNAc...) asparagine glycans are attached at residues asparagine 241, asparagine 300, asparagine 394, asparagine 508, and asparagine 562. A helical membrane pass occupies residues 608–628 (QAGLFLGASIMSVIEFLFFAV). Residues 629-664 (RTLGIACKPRRWRQKTELLRAEELNDAEKGVSTNNN) are Cytoplasmic-facing.

The protein belongs to the amiloride-sensitive sodium channel (TC 1.A.6) family.

It localises to the membrane. Probable sodium channel subunit. The polypeptide is Degenerin del-1 (del-1) (Caenorhabditis elegans).